The following is a 162-amino-acid chain: Protein archease (162 aa).

Ca(2+) is bound by residues D34, D161, and I162.

This sequence belongs to the archease family. Component of the tRNA-splicing ligase complex.

Component of the tRNA-splicing ligase complex required to facilitate the enzymatic turnover of catalytic subunit RTCB. Together with ddx1, acts by facilitating the guanylylation of RTCB, a key intermediate step in tRNA ligation. The sequence is that of Protein archease from Ictalurus punctatus (Channel catfish).